The following is a 364-amino-acid chain: CLIP domain-containing serine protease B15 (364 aa).

The N-terminal stretch at 1-19 is a signal peptide; it reads MRWLVCLIVSWCSLVPLGA. A Clip domain is found at 30–89; that stretch reads PCQTPSGTAGTCEPVKNCSYVRKILKSPDFSHYDTTYLDTLKCGDLMVPMRKKPIPLLCC. Disulfide bonds link Cys31/Cys88, Cys41/Cys72, and Cys47/Cys89. An N-linked (GlcNAc...) asparagine glycan is attached at Asn46. Residues 107 to 359 enclose the Peptidase S1 domain; sequence IYFGEETERG…YLDWMETVMF (253 aa). An N-linked (GlcNAc...) asparagine glycan is attached at Asn131. Cysteines 137 and 153 form a disulfide. His152 (charge relay system) is an active-site residue. Asn171, Asn177, and Asn206 each carry an N-linked (GlcNAc...) asparagine glycan. The active-site Charge relay system is the Asp212. Cys279 and Cys296 are joined by a disulfide. N-linked (GlcNAc...) asparagine glycosylation is found at Asn287 and Asn301. An intrachain disulfide couples Cys306 to Cys335. Ser310 functions as the Charge relay system in the catalytic mechanism.

This sequence belongs to the peptidase S1 family. CLIP subfamily. Post-translationally, N-glycosylated. Proteolytically cleaved. As to expression, expressed by a subpopulation of hemocytes.

The protein localises to the secreted. Functionally, serine protease. Plays a role in innate immunity against infections by parasite P.berghei and by Gram-negative bacteria such as E.coli. In response to P.berghei infection, contributes to the clearing of parasite ookinetes independent of melanization, an innate immune response which consists in the deposition of melanin pigments on invading pathogens and parasites. The polypeptide is CLIP domain-containing serine protease B15 (Anopheles gambiae (African malaria mosquito)).